A 486-amino-acid polypeptide reads, in one-letter code: Cardiolipin synthase A (486 aa).

2 helical membrane passes run 3–23 and 38–58; these read TFYTVISWLAIFGYWLLIASV and MAWLLIIYILPLVGIIAYLSF. 2 PLD phosphodiesterase domains span residues 219–246 and 399–426; these read MDLRQHRKVVLIDNFIAYTGSMNLVDPR and EGGLLHTKSVLVDGQLSLVGTVNLDMRS. Active-site residues include histidine 224, lysine 226, aspartate 231, histidine 404, lysine 406, and aspartate 411.

The protein belongs to the phospholipase D family. Cardiolipin synthase subfamily. ClsA sub-subfamily.

The protein resides in the cell inner membrane. The enzyme catalyses 2 a 1,2-diacyl-sn-glycero-3-phospho-(1'-sn-glycerol) = a cardiolipin + glycerol. Its function is as follows. Catalyzes the reversible phosphatidyl group transfer from one phosphatidylglycerol molecule to another to form cardiolipin (CL) (diphosphatidylglycerol) and glycerol. The polypeptide is Cardiolipin synthase A (Edwardsiella ictaluri (strain 93-146)).